Consider the following 424-residue polypeptide: Phosphoribosylamine--glycine ligase (424 aa).

One can recognise an ATP-grasp domain in the interval 111–312; the sequence is KAFVKECGIK…LLDLFLATAK (202 aa). 137–189 contributes to the ATP binding site; that stretch reads IQNASFPLVIKALNKNTSIVHHQEEALKILEDALKQSNEPVIIEPFLEGFELS.

It belongs to the GARS family.

The catalysed reaction is 5-phospho-beta-D-ribosylamine + glycine + ATP = N(1)-(5-phospho-beta-D-ribosyl)glycinamide + ADP + phosphate + H(+). It participates in purine metabolism; IMP biosynthesis via de novo pathway; N(1)-(5-phospho-D-ribosyl)glycinamide from 5-phospho-alpha-D-ribose 1-diphosphate: step 2/2. The chain is Phosphoribosylamine--glycine ligase (purD) from Helicobacter pylori (strain J99 / ATCC 700824) (Campylobacter pylori J99).